A 776-amino-acid chain; its full sequence is Chitin synthase 1 (776 aa).

Helical transmembrane passes span 451-471 (LVSL…FYFL), 487-507 (FWIF…LFIV), 523-543 (LIIL…VFVI), 558-578 (VLVS…LMSI), 695-714 (VVLF…VQVY), and 723-743 (IYLA…AIGS).

The protein belongs to the chitin synthase family.

It is found in the cell membrane. It catalyses the reaction [(1-&gt;4)-N-acetyl-beta-D-glucosaminyl](n) + UDP-N-acetyl-alpha-D-glucosamine = [(1-&gt;4)-N-acetyl-beta-D-glucosaminyl](n+1) + UDP + H(+). Requires proteolytic activation. Polymerizes chitin, a structural polymer of the cell wall and septum, by transferring the sugar moiety of UDP-GlcNAc to the non-reducing end of the growing chitin polymer. Also involved in forming cross walls in the hyphal phase. The chain is Chitin synthase 1 (CHS1) from Candida albicans (Yeast).